A 394-amino-acid chain; its full sequence is Elongation factor Tu (394 aa).

Residues 10–204 (KLHINVGTIG…VLDSYIPEPK (195 aa)) enclose the tr-type G domain. The tract at residues 19-26 (GHVDHGKT) is G1. 19–26 (GHVDHGKT) provides a ligand contact to GTP. Threonine 26 lines the Mg(2+) pocket. The tract at residues 60–64 (GITIN) is G2. The tract at residues 81 to 84 (DCPG) is G3. Residues 81–85 (DCPGH) and 136–139 (NKCD) contribute to the GTP site. A G4 region spans residues 136 to 139 (NKCD). Residues 174 to 176 (SAL) form a G5 region.

The protein belongs to the TRAFAC class translation factor GTPase superfamily. Classic translation factor GTPase family. EF-Tu/EF-1A subfamily. Monomer.

Its subcellular location is the cytoplasm. The catalysed reaction is GTP + H2O = GDP + phosphate + H(+). Functionally, GTP hydrolase that promotes the GTP-dependent binding of aminoacyl-tRNA to the A-site of ribosomes during protein biosynthesis. The sequence is that of Elongation factor Tu from Baumannia cicadellinicola subsp. Homalodisca coagulata.